A 347-amino-acid chain; its full sequence is Quinolinate synthase (347 aa).

Residues His-47 and Ser-68 each coordinate iminosuccinate. A [4Fe-4S] cluster-binding site is contributed by Cys-113. Residues 139 to 141 (YAN) and Ser-156 contribute to the iminosuccinate site. Cys-200 provides a ligand contact to [4Fe-4S] cluster. Residues 226 to 228 (HPE) and Thr-243 contribute to the iminosuccinate site. Cys-297 serves as a coordination point for [4Fe-4S] cluster.

This sequence belongs to the quinolinate synthase family. Type 1 subfamily. It depends on [4Fe-4S] cluster as a cofactor.

The protein resides in the cytoplasm. It catalyses the reaction iminosuccinate + dihydroxyacetone phosphate = quinolinate + phosphate + 2 H2O + H(+). It participates in cofactor biosynthesis; NAD(+) biosynthesis; quinolinate from iminoaspartate: step 1/1. In terms of biological role, catalyzes the condensation of iminoaspartate with dihydroxyacetone phosphate to form quinolinate. This chain is Quinolinate synthase, found in Escherichia coli O139:H28 (strain E24377A / ETEC).